The following is a 93-amino-acid chain: Small ribosomal subunit protein uS19 (93 aa).

Belongs to the universal ribosomal protein uS19 family.

Protein S19 forms a complex with S13 that binds strongly to the 16S ribosomal RNA. This Synechococcus sp. (strain JA-3-3Ab) (Cyanobacteria bacterium Yellowstone A-Prime) protein is Small ribosomal subunit protein uS19.